We begin with the raw amino-acid sequence, 237 residues long: Purine nucleoside phosphorylase DeoD-type (237 aa).

His4 is an a purine D-ribonucleoside binding site. Phosphate is bound by residues Gly20, Arg24, Arg43, and 87–90; that span reads RVGT. Residues 180 to 182 and 204 to 205 each bind a purine D-ribonucleoside; these read EME and SD. Asp205 serves as the catalytic Proton donor.

It belongs to the PNP/UDP phosphorylase family. As to quaternary structure, homohexamer; trimer of homodimers.

It carries out the reaction a purine D-ribonucleoside + phosphate = a purine nucleobase + alpha-D-ribose 1-phosphate. The catalysed reaction is a purine 2'-deoxy-D-ribonucleoside + phosphate = a purine nucleobase + 2-deoxy-alpha-D-ribose 1-phosphate. Its function is as follows. Catalyzes the reversible phosphorolytic breakdown of the N-glycosidic bond in the beta-(deoxy)ribonucleoside molecules, with the formation of the corresponding free purine bases and pentose-1-phosphate. This Streptococcus suis (strain 98HAH33) protein is Purine nucleoside phosphorylase DeoD-type.